The following is a 401-amino-acid chain: CLIP domain-containing serine protease B9 (401 aa).

The first 26 residues, 1–26 (MTSYNRSVAWLTVCVLLALHIGGSHQ), serve as a signal peptide directing secretion. In terms of domain architecture, Clip spans 30 to 85 (QCTTPTRLRGRCISIYECDSILDYFKQRILTWEEREFLRKSQCTGATSGRQPFVCC). 3 disulfides stabilise this stretch: Cys31-Cys84, Cys41-Cys72, and Cys47-Cys85. Asn88 is a glycosylation site (N-linked (GlcNAc...) asparagine). Positions 148-400 (IYGGQNADID…YMAWVRSNIK (253 aa)) constitute a Peptidase S1 domain. A disulfide bridge links Cys178 with Cys194. Residues His193 and Asp257 each act as charge relay system in the active site. 2 disulfide bridges follow: Cys322–Cys339 and Cys349–Cys376. The N-linked (GlcNAc...) asparagine glycan is linked to Asn330. Catalysis depends on Ser353, which acts as the Charge relay system.

This sequence belongs to the peptidase S1 family. CLIP subfamily. As to quaternary structure, forms a covalent heterodimer with SRPN2; the interaction inhibits CLIPB9 protease activity. In terms of processing, proteolytic cleavage is necessary for activation.

The protein localises to the secreted. Its activity is regulated as follows. Inhibited by serpin SRPN2. In terms of biological role, serine protease that functions in the melanization-mediated immune response. Cleaves and activates prophenoloxidase (PPO), which is required for the activation of the prophenoloxidase cascade probably following the recognition of pathogen-derived products. This chain is CLIP domain-containing serine protease B9, found in Anopheles gambiae (African malaria mosquito).